The primary structure comprises 227 residues: PKHD-type hydroxylase BamMC406_4714 (227 aa).

The Fe2OG dioxygenase domain occupies 78–178 (KVFPPLFNRY…RVASFFWIQS (101 aa)). Fe cation is bound by residues His96, Asp98, and His159. Arg169 contributes to the 2-oxoglutarate binding site.

Requires Fe(2+) as cofactor. L-ascorbate serves as cofactor.

This chain is PKHD-type hydroxylase BamMC406_4714, found in Burkholderia ambifaria (strain MC40-6).